A 377-amino-acid polypeptide reads, in one-letter code: Protein-tyrosine sulfotransferase 2 (377 aa).

Over 1 to 8 the chain is Cytoplasmic; sequence MRLSMRRA. The helical; Signal-anchor for type II membrane protein transmembrane segment at 9 to 25 threads the bilayer; the sequence is LLAAGLALALVLAVHLG. Residues 26–377 are Lumenal-facing; it reads QRVLECQAVL…NSTSSHLGSS (352 aa). 78–82 is a binding site for 3'-phosphoadenylyl sulfate; it reads RSGTT. C96 and C156 form a disulfide bridge. The active-site Proton donor/acceptor is the E99. Residues 101–105 form an interaction with peptide substrate region; that stretch reads RIIPR. Positions 183, 191, and 195 each coordinate 3'-phosphoadenylyl sulfate. C225 and C233 are oxidised to a cystine. 3'-phosphoadenylyl sulfate contacts are provided by residues Y238, 285–294, and K300; that span reads STDQVIKPVN. N-linked (GlcNAc...) asparagine glycosylation is found at N343 and N368.

The protein belongs to the protein sulfotransferase family. In terms of assembly, homodimer. Can also form heterodimers with TPST1. In terms of processing, N-glycosylated.

Its subcellular location is the golgi apparatus membrane. It catalyses the reaction L-tyrosyl-[protein] + 3'-phosphoadenylyl sulfate = O-sulfo-L-tyrosine-[protein] + adenosine 3',5'-bisphosphate + H(+). Functionally, catalyzes the O-sulfation of tyrosine residues within acidic motifs of polypeptides, using 3'-phosphoadenylyl sulfate (PAPS) as cosubstrate. In Bos taurus (Bovine), this protein is Protein-tyrosine sulfotransferase 2 (TPST2).